Consider the following 234-residue polypeptide: Demethylmenaquinone methyltransferase (234 aa).

S-adenosyl-L-methionine is bound by residues T58, D79, and 106 to 107; that span reads NA.

This sequence belongs to the class I-like SAM-binding methyltransferase superfamily. MenG/UbiE family.

It carries out the reaction a 2-demethylmenaquinol + S-adenosyl-L-methionine = a menaquinol + S-adenosyl-L-homocysteine + H(+). It participates in quinol/quinone metabolism; menaquinone biosynthesis; menaquinol from 1,4-dihydroxy-2-naphthoate: step 2/2. Its function is as follows. Methyltransferase required for the conversion of demethylmenaquinol (DMKH2) to menaquinol (MKH2). The sequence is that of Demethylmenaquinone methyltransferase from Geobacillus kaustophilus (strain HTA426).